The primary structure comprises 251 residues: Ubiquinone/menaquinone biosynthesis C-methyltransferase UbiE (251 aa).

S-adenosyl-L-methionine contacts are provided by residues Thr74, Asp95, and 123–124 (NA).

Belongs to the class I-like SAM-binding methyltransferase superfamily. MenG/UbiE family.

The enzyme catalyses a 2-demethylmenaquinol + S-adenosyl-L-methionine = a menaquinol + S-adenosyl-L-homocysteine + H(+). It carries out the reaction a 2-methoxy-6-(all-trans-polyprenyl)benzene-1,4-diol + S-adenosyl-L-methionine = a 5-methoxy-2-methyl-3-(all-trans-polyprenyl)benzene-1,4-diol + S-adenosyl-L-homocysteine + H(+). It functions in the pathway quinol/quinone metabolism; menaquinone biosynthesis; menaquinol from 1,4-dihydroxy-2-naphthoate: step 2/2. Its pathway is cofactor biosynthesis; ubiquinone biosynthesis. Methyltransferase required for the conversion of demethylmenaquinol (DMKH2) to menaquinol (MKH2) and the conversion of 2-polyprenyl-6-methoxy-1,4-benzoquinol (DDMQH2) to 2-polyprenyl-3-methyl-6-methoxy-1,4-benzoquinol (DMQH2). This is Ubiquinone/menaquinone biosynthesis C-methyltransferase UbiE from Shewanella sp. (strain ANA-3).